The primary structure comprises 342 residues: Protein-glutamate methylesterase/protein-glutamine glutaminase 1 (342 aa).

Positions 2 to 119 (RVAIVNDMPL…GDPKAAAQRL (118 aa)) constitute a Response regulatory domain. A 4-aspartylphosphate modification is found at Asp-53. The 184-residue stretch at 146-329 (SDTDAALVVI…LPLGDIAPRL (184 aa)) folds into the CheB-type methylesterase domain. Active-site residues include Ser-158, His-185, and Asp-278.

Belongs to the CheB family. In terms of processing, phosphorylated by CheA. Phosphorylation of the N-terminal regulatory domain activates the methylesterase activity.

The protein resides in the cytoplasm. It catalyses the reaction [protein]-L-glutamate 5-O-methyl ester + H2O = L-glutamyl-[protein] + methanol + H(+). The catalysed reaction is L-glutaminyl-[protein] + H2O = L-glutamyl-[protein] + NH4(+). Its function is as follows. Involved in chemotaxis. Part of a chemotaxis signal transduction system that modulates chemotaxis in response to various stimuli. Catalyzes the demethylation of specific methylglutamate residues introduced into the chemoreceptors (methyl-accepting chemotaxis proteins or MCP) by CheR. Also mediates the irreversible deamidation of specific glutamine residues to glutamic acid. The protein is Protein-glutamate methylesterase/protein-glutamine glutaminase 1 of Bordetella avium (strain 197N).